A 103-amino-acid chain; its full sequence is Small ribosomal subunit protein uS10 (103 aa).

This sequence belongs to the universal ribosomal protein uS10 family. As to quaternary structure, part of the 30S ribosomal subunit.

Its function is as follows. Involved in the binding of tRNA to the ribosomes. The chain is Small ribosomal subunit protein uS10 from Leptothrix cholodnii (strain ATCC 51168 / LMG 8142 / SP-6) (Leptothrix discophora (strain SP-6)).